The sequence spans 118 residues: Large ribosomal subunit protein bL17 (118 aa).

Belongs to the bacterial ribosomal protein bL17 family. Part of the 50S ribosomal subunit. Contacts protein L32.

This Campylobacter hominis (strain ATCC BAA-381 / DSM 21671 / CCUG 45161 / LMG 19568 / NCTC 13146 / CH001A) protein is Large ribosomal subunit protein bL17.